The chain runs to 79 residues: Translational regulator CsrA (79 aa).

Belongs to the CsrA/RsmA family. Homodimer; the beta-strands of each monomer intercalate to form a hydrophobic core, while the alpha-helices form wings that extend away from the core.

It localises to the cytoplasm. Its function is as follows. A translational regulator that binds mRNA to regulate translation initiation and/or mRNA stability. Usually binds in the 5'-UTR at or near the Shine-Dalgarno sequence preventing ribosome-binding, thus repressing translation. Its main target seems to be the major flagellin gene, while its function is anatagonized by FliW. This Helicobacter hepaticus (strain ATCC 51449 / 3B1) protein is Translational regulator CsrA.